The chain runs to 226 residues: Deoxyribose-phosphate aldolase (226 aa).

The active-site Proton donor/acceptor is the Asp-95. The active-site Schiff-base intermediate with acetaldehyde is the Lys-157. Lys-186 (proton donor/acceptor) is an active-site residue.

It belongs to the DeoC/FbaB aldolase family. DeoC type 1 subfamily.

The protein localises to the cytoplasm. It carries out the reaction 2-deoxy-D-ribose 5-phosphate = D-glyceraldehyde 3-phosphate + acetaldehyde. It participates in carbohydrate degradation; 2-deoxy-D-ribose 1-phosphate degradation; D-glyceraldehyde 3-phosphate and acetaldehyde from 2-deoxy-alpha-D-ribose 1-phosphate: step 2/2. With respect to regulation, partially inhibited by acetaldehyde. After incubation for 2, 4 and 6 hours in 300 mM acetaldehyde at 25 degrees Celsius, retains approximately 61.32%, 42.33% and 34.73% of the initial 2-deoxy-D-ribose-5-phosphate (DR5P) cleavage activity, respectively. Catalyzes a reversible aldol reaction between acetaldehyde and D-glyceraldehyde 3-phosphate to generate 2-deoxy-D-ribose 5-phosphate. Its function is as follows. In vitro, DERA can catalyze the aldol condensation of chloroacetaldehyde (CHAD) and acetaldehyde (ACD), yielding (S)-4-chloro-3-hydroxybutanal ((S)-CHB), which can combine with another aldehyde to form (3R,5S)-6-chloro-2,4,6-trideoxyhexapyranose (CTeHP), a key intermediate for statin drugs. In Pseudomonas syringae pv. syringae (strain B728a), this protein is Deoxyribose-phosphate aldolase.